The following is a 443-amino-acid chain: Probable glycine dehydrogenase (decarboxylating) subunit 1 (443 aa).

This sequence belongs to the GcvP family. N-terminal subunit subfamily. In terms of assembly, the glycine cleavage system is composed of four proteins: P, T, L and H. In this organism, the P 'protein' is a heterodimer of two subunits.

It catalyses the reaction N(6)-[(R)-lipoyl]-L-lysyl-[glycine-cleavage complex H protein] + glycine + H(+) = N(6)-[(R)-S(8)-aminomethyldihydrolipoyl]-L-lysyl-[glycine-cleavage complex H protein] + CO2. In terms of biological role, the glycine cleavage system catalyzes the degradation of glycine. The P protein binds the alpha-amino group of glycine through its pyridoxal phosphate cofactor; CO(2) is released and the remaining methylamine moiety is then transferred to the lipoamide cofactor of the H protein. The protein is Probable glycine dehydrogenase (decarboxylating) subunit 1 of Endomicrobium trichonymphae.